The primary structure comprises 355 residues: MTALKNDRFLRALLKQPVDVTPVWMMRQAGRYLPEYRASRAQAGDFMSLCMNPEFACEVTLQPLDRYPQLDAAILFSDILTIPDAMGQGLYFETGEGPRFKKVVSTLADIEALPIPDPHKDLGYVMDAVSTIRRELNGRVPLIGFSGSPWTLATYMVEGGSSKDFRKTKAMLYDNPQAMHLLLDKLAQSVTSYLNGQIQAGAQAVQIFDTWGGNLSAAAYQEFSLAYMKKIVSGLIREHDGRKVPVILFTKNGGLWLESIAEAGADALGLDWTCDIGNARARVGDKVALQGNMDPTVLYAKPEAIRTEVGRILASYGKGSGHVFNLGHGITPEVDPEHAGAFLRAVHELSAQYHE.

Substrate is bound by residues Arg-27 to Arg-31, Asp-78, Tyr-155, Thr-210, and His-328.

It belongs to the uroporphyrinogen decarboxylase family. Homodimer.

It is found in the cytoplasm. The catalysed reaction is uroporphyrinogen III + 4 H(+) = coproporphyrinogen III + 4 CO2. Its pathway is porphyrin-containing compound metabolism; protoporphyrin-IX biosynthesis; coproporphyrinogen-III from 5-aminolevulinate: step 4/4. Its function is as follows. Catalyzes the decarboxylation of four acetate groups of uroporphyrinogen-III to yield coproporphyrinogen-III. This chain is Uroporphyrinogen decarboxylase, found in Pseudomonas fluorescens (strain Pf0-1).